A 691-amino-acid chain; its full sequence is Elongation factor G (691 aa).

Positions 8–282 (DRVRNIGIAA…AVVDYLPAPI (275 aa)) constitute a tr-type G domain. GTP contacts are provided by residues 17-24 (AHIDAGKT), 81-85 (DTPGH), and 135-138 (NKMD).

Belongs to the TRAFAC class translation factor GTPase superfamily. Classic translation factor GTPase family. EF-G/EF-2 subfamily.

The protein localises to the cytoplasm. Functionally, catalyzes the GTP-dependent ribosomal translocation step during translation elongation. During this step, the ribosome changes from the pre-translocational (PRE) to the post-translocational (POST) state as the newly formed A-site-bound peptidyl-tRNA and P-site-bound deacylated tRNA move to the P and E sites, respectively. Catalyzes the coordinated movement of the two tRNA molecules, the mRNA and conformational changes in the ribosome. The chain is Elongation factor G from Synechococcus sp. (strain RCC307).